Consider the following 901-residue polypeptide: Protein translocase subunit SecA (901 aa).

ATP-binding positions include glutamine 87, 105 to 109 (GEGKT), and aspartate 512. The tract at residues 852-901 (AQMQQLSHQSDDEAAAQDLAAQTGERKVGRNDPCPCGSGKKYKQCHGRLS) is disordered. Residues cysteine 885, cysteine 887, cysteine 896, and histidine 897 each coordinate Zn(2+). Basic residues predominate over residues 891–901 (KKYKQCHGRLS).

Belongs to the SecA family. In terms of assembly, monomer and homodimer. Part of the essential Sec protein translocation apparatus which comprises SecA, SecYEG and auxiliary proteins SecDF-YajC and YidC. The cofactor is Zn(2+).

The protein localises to the cell inner membrane. Its subcellular location is the cytoplasm. It catalyses the reaction ATP + H2O + cellular proteinSide 1 = ADP + phosphate + cellular proteinSide 2.. Part of the Sec protein translocase complex. Interacts with the SecYEG preprotein conducting channel. Has a central role in coupling the hydrolysis of ATP to the transfer of proteins into and across the cell membrane, serving both as a receptor for the preprotein-SecB complex and as an ATP-driven molecular motor driving the stepwise translocation of polypeptide chains across the membrane. This is Protein translocase subunit SecA from Klebsiella pneumoniae subsp. pneumoniae (strain ATCC 700721 / MGH 78578).